A 360-amino-acid chain; its full sequence is Arginase, non-hepatic 2 (360 aa).

Residues histidine 122, aspartate 145, histidine 147, and aspartate 149 each coordinate Mn(2+). Substrate contacts are provided by residues 147–151 (HADIN), 158–160 (SGN), and aspartate 204. The Mn(2+) site is built by aspartate 253 and aspartate 255. Substrate-binding residues include threonine 267 and glutamate 298.

Belongs to the arginase family. As to quaternary structure, homotrimer. Requires Mn(2+) as cofactor. Expressed at differing tadpole stages in tail, intestine, hindlimb and trunk region. Strongest in tadpole tail.

It catalyses the reaction L-arginine + H2O = urea + L-ornithine. It participates in nitrogen metabolism; urea cycle; L-ornithine and urea from L-arginine: step 1/1. As well as its role in the urea cycle, may be involved in tissue remodeling. In Xenopus laevis (African clawed frog), this protein is Arginase, non-hepatic 2 (arg2-b).